A 746-amino-acid polypeptide reads, in one-letter code: Protein C-mannosyl-transferase DPY19L1 (746 aa).

Positions M1–D68 are disordered. Residues S28 and S31 each carry the phosphoserine modification. Residues R59–D68 show a composition bias toward low complexity. 11 helical membrane-spanning segments follow: residues L137–M159, A227–I247, L257–T279, L307–P325, F331–D350, I357–G374, T380–M396, V405–L425, L481–M501, G520–M540, and L562–A582.

It belongs to the dpy-19 family.

It is found in the endoplasmic reticulum membrane. The enzyme catalyses L-tryptophyl-[protein] + a di-trans,poly-cis-dolichyl beta-D-mannosyl phosphate = C-alpha-D-mannosyl-L-tryptophyl-[protein] + a di-trans,poly-cis-dolichyl phosphate + H(+). The protein operates within protein modification; protein glycosylation. In terms of biological role, C-mannosyltransferase that mediates the C-mannosylation tryptophan residues on target proteins. The reaction occurs on the luminal side of the endoplasmic reticulum and involves the transfer of a mannose unit from a dolichylphosphate mannose (Dol-P-Man) donor to an acceptor protein containing a WxxW consensus sequence. C-mannosylates the first two tryptophans in the WxxWxxWxxC sequence motif in thrombospondin (TSP) type-1 repeats of UNC5A. Regulates neurite extension during development. In Mus musculus (Mouse), this protein is Protein C-mannosyl-transferase DPY19L1 (Dpy19l1).